A 146-amino-acid chain; its full sequence is Large ribosomal subunit protein uL15 (146 aa).

2 stretches are compositionally biased toward basic residues: residues 1–13 (MIRK…RMRG) and 22–38 (SKKR…GQAG). A disordered region spans residues 1 to 38 (MIRKRRKITRMRGSRTVGGGCSKKRRGAGHRGGRGQAG).

Belongs to the universal ribosomal protein uL15 family. In terms of assembly, part of the 50S ribosomal subunit.

Functionally, binds to the 23S rRNA. The sequence is that of Large ribosomal subunit protein uL15 from Methanothermobacter thermautotrophicus (strain ATCC 29096 / DSM 1053 / JCM 10044 / NBRC 100330 / Delta H) (Methanobacterium thermoautotrophicum).